Reading from the N-terminus, the 84-residue chain is MAEKFNLQDRFLNILRTNKIPVKVYLVNGFQTKGIIRSFDNFTMLLENGSQQNLIYKHAVSTIMPESFVKLTKQQNEESENEEK.

The 61-residue stretch at 9-69 (DRFLNILRTN…VSTIMPESFV (61 aa)) folds into the Sm domain.

It belongs to the Hfq family. As to quaternary structure, homohexamer.

Its function is as follows. RNA chaperone that binds small regulatory RNA (sRNAs) and mRNAs to facilitate mRNA translational regulation in response to envelope stress, environmental stress and changes in metabolite concentrations. Also binds with high specificity to tRNAs. In Thermosipho africanus (strain TCF52B), this protein is RNA-binding protein Hfq.